A 3608-amino-acid chain; its full sequence is MSRKERNFKRFFGQEKARVKLYKSGKQWVKAGIREVQLLKVLGLPFLNKDVEQINNLDTNKDKNFKNQAMKATGLAGGAFTFAMLNDHHAYAASETPMTSEIASNSETVANQNSTTVTKSETSTTEYISSQTSTSQDATSSTNSTEKSTSSSTTDSQTSTDSTSDKSTSNSEKQDSSMSNSDTKASSSSTTDNSTSNNSTTSEKDTNSQANTTSTDSQKGSTSTNDNSITSTSTKDNQIRKNSTESNSITASNSTSDSNSGSTVSTNSTTSQLTSTSESQINTDLGSTLLVSDSTSTSTSTAPLKLRTFSRLATTTFAAAAATSTTNTYTGAGTDTNYNIPIYYKLTTVNNGTSMTFTYTVTYDNPATTTVERPTALSNSYAIYNTGTTNQTMFTLGSAYGTPSTATSYITDSTGAQVSNPRANTTNINKQGSGYTWANGYQMNGAQAKQGYGLTTTWTVPINSSGDTSFTFNPYSTSVTGGTNFFNGKKVTVTDPTSTANSQSASTSTANSQSASTSKSTSTANSQSASTSTSTSTANSQSASTSTSTSTANSQSASTSTSTSTANSQSASTSTSTSTANSQSTSTSTSTSTANSQSTSTSTSTSVSDSTSASTSLSGSTSTSVSDSTSASTSLSDSASTSVSDSTSASTSLSASTSTSESDSTSASTSLSESTSTSLSDSLSASTSLSDSASTSVSDSTSASTSLSGSESASLSDSASASTSLSESTSTSESTSTSESDSTSASTSLSGSESASLSDSASASTSLSGSESASLSDSASASTSLSGSESASLSDSASASTSLSGSESASLSDSASASTSLSGSESASLSDSASASTSLSESTSTSLSDSASASTSLSESTSTSVSDSTSASTSLSASTSTSVSDSTSTSTSDSASTSTSVSDSTSTSTSLSGSTSTSVSDSTSASTSLSASTSTSVSDSTSTSTSDSASTSTSVSDSTSTSTSLSGSTSTSVSDSTSASTSLSESTSTSLSDSASASTSLSESTSTSVSDSTSTSTSDSASTSTSVSDSTSTSTSLSGSTSTSVSDSTSASTSDSASTSTSVSDSTSASTSDSASTSTSVSDSTSTSTSLSGSTSTSVSDSTSASTSLSESTSTSVSDSTSASTSLSDSASTSVSDSTSASTSLSESTSTSVSDSTSTSTSLSESTSTSVSDSASASTSLSDSASTSVSDSTSASTSLSGSTSTSVSDSTSTSTSLSESTSTSLSDSASASTSLSDSASTSVSDSTSASTSLSGSTSTSVSDSTSTSTSLSESTSTSLSDSASASTSLSASTSTSVSDSTSASTSLSGSTSTSESDSTSMSTSLSGSESTSLSDSLSASTSLSGSTSTSVSDSTSASTSLSGSTSTSVSDSTSVSTSLSASTSTSESDSTSTSTSDSASTSTSVSDSTSASTSLSASTSTSVSDSTSASTSLSASTSTSVSDSTSASTSLSASTSTSVSDSTSASTSLSASTSTSVSDSTSMSTSLSGSESTSLSDSLSASTSVSASTSTSVSDSTSASTSLSGSTSTSVSDSTSTSTSLSESTSTSVSDSASASTSLSASTSTSVSDSTSASTSLSASTSTSVSDSTSASTSLSASTSTSVSDSTSASTSLSASTSTSVSDSTSTSTSLSASTSTSVSDSTSASTSLSGSASASLSDSLSASTSVSASTSTSVSDSTSMSTSLSGSESTSLSDSLSASTSVSASTSTSVSDSTSASTSLSGSTSTSVSDSTSTSTSLSESTSTSVSDSASASTSLSDSASTSVSDSTSASTSLSGSTSTSVSDSTSTSTSLSESTSTSLSDSASASTSLSDSASTSVSDSTSASTSLSGSTSTSVSDSTSTSTSLSESTSTSLSDSTSISTSLSASTSTSESDSTSTSTSLSGSTSTSVSDSISRSTSLSGSTSTSVSDSTSTSTSDSASTSTSVSDSTSASTSLSASTSTSVSDSTSASTSLSASTSTSVSDSTSASTSLSASTSTSVSDSTSASTSLSASTSTSVSDSTSASTSLSASTSTSVSDSTSASTSLSASTSTSVSDSTSTSTSLSASTSTSVSDSTSASTSLSGSASASLSDSLSASTSVSASTSTSVSDSTSTSTSLSESTSTSLSNSASASTSLSGSTSTSVSDSTSASTSLSASTSTSVSDSTSMSTSLSGSESTSLSDSLSASTSVSASTSTSVSDSTSASTSLSGSTSTSVSDSTSTSTSLSESTSTSVSDSASASTSLSDSASTSVSDSTSASTSLSGSTSTSVSDSTSTSTSLSESTSTSLSDSASASTSLSDSASTSVSDSTSASTSLSGSTSTSVSDSTSASTSLSGSTSTSVSDSTSTSTSLSASTSTSESDSTSTSTSLSGSTSTSVSDSISGSTSLSGSTSTSVSDSTSTSTSDSASTSTSVSDSTSASTSLSASTSTSVSDSTSASTSLSASTSTSVSDSTSASTSLSGSASASLSDSLSASTSVSASTSTSVSDSTSTSTSLSESTSTSLSNSASASTSLSGSTSTSVSDSTSASTSLSASTSTSVSDSTSTSTSLSESTSTSLSDSASASTSLSDSASTSVSDSTSASTSLSGSESTSLSDSASASTSLSASTSTSVSDSTSTSTSDSVSTSTSMSDSTSMSTSLSGSTSTSVSDSTSASTSLSGSTSTSVSDSTSVSTSLSASTSTSESDSTSTSTSLSGSTSTSVSDSTSASTSLSGSTSTSVSDSTSTSTSDSASTSTSVSDSTSASTSLSASTSTSVSDSTSASTSLSASTSTSVSDSTSASTSLSASTSTSVSDSTSASTSLSASTSTSVSDSTSTNTSLSASTSTSVSDSTSASTSLSASTSTSVSDSTSASTSLSASTSTSVSDSTSTSTSLSASTSTSVSDSTSASTSLSGSASASLSDSLSASTSVSASTSTSVSDSTSTSTSLSESTSTSLSNSASASTSLSGSASASLSDSLSASTSVSASTSTSVSDSTSTSTSLSESTSTSLSDSASASTSLSDSASTSVSDSTSASTSLSESTSTSVSDSTSTSTSLSGSESTSLSDSASASTSLSASTSTSVSDSTSTSTSDSVSTSTSMSDSTSMSTSLSGSTSTSVSDSTSASTSLSGSTSTSVSDSTSVSTSLSASTSTSESDSTSTSTSLSGSTSTSVSDSISGSTSLSGSTSTSVSDSTSTSTSDSASTSTSVSDSTSASTSLSASTSTSVSDSTSASTSLSASTSTSVSDSTSASTSLSASTSTSVSDSTSASTSLSASTSTSVSDSTSTSTSLSASTSTSVSDSTSGSTSLSASTSTSVSDSTSTSTSLSASTSTSVSDSTSMSTSLSGSTSTSVSDSTSASTSLSGSTSTSVSDSTSTSTSLSASTSTSVSDSTSTSTSLSGSTSTSVSDSTSASTSSSESTSTSVSDSTSASVSTSISTSISMSESSSTSASTSDSTSTSASTSESRSASHSMSGTDSNNTSSSDSKSHSISNSDSNTTSDSASASTSISDSSSTSTSDSNASHSFSTSHSVSESNSMSTSHSQFDSISTSESMSGTDSTSLSTSLSHSASTSNSTSMTTSESQSNNDSQMHSNSLHHDAKDELPDTGDSDSNSTGLVSAVAAMLAGLGLFGKSRKNKKDKKNKGSEQ.

Residues 1-91 (MSRKERNFKR…FAMLNDHHAY (91 aa)) form the signal peptide. The interval 92 to 302 (AASETPMTSE…DSTSTSTSTA (211 aa)) is serine-rich repeat region 1, SRR1. Disordered regions lie at residues 105–280 (NSET…SESQ), 495–3575 (DPTS…SNST), and 3588–3608 (LGLF…GSEQ). Positions 114–201 (STTVTKSETS…DNSTSNNSTT (88 aa)) are enriched in low complexity. Positions 209–220 (QANTTSTDSQKG) are enriched in polar residues. 3 stretches are compositionally biased toward low complexity: residues 221–234 (STST…STST), 244–280 (TESN…SESQ), and 497–3545 (TSTA…ESQS). Positions 303–755 (PLKLRTFSRL…STSLSGSESA (453 aa)) are non-repeat region (NRR). The serine-rich repeat region 2, SRR2 stretch occupies residues 756-3567 (SLSDSASAST…HDAKDELPDT (2812 aa)). The LPXTG sorting signal signature appears at 3564–3568 (LPDTG). The residue at position 3567 (threonine 3567) is a Pentaglycyl murein peptidoglycan amidated threonine. Positions 3568–3608 (GDSDSNSTGLVSAVAAMLAGLGLFGKSRKNKKDKKNKGSEQ) are cleaved as a propeptide — removed by sortase. Residues 3593-3602 (KSRKNKKDKK) show a composition bias toward basic residues.

This sequence belongs to the serine-rich repeat protein (SRRP) family. In terms of processing, proteolytically cleaved by a metalloprotease. Glycosylated. It is probable that most of the Ser residues in SSR1 and SSR2 are O-GlcNAcylated. Sequential glycosylation by sugar transferases are able to generate complex sugar polymorphisms.

The protein resides in the secreted. The protein localises to the cell wall. In terms of biological role, mediates binding to human platelets, possibly through a receptor-ligand interaction. This Staphylococcus haemolyticus (strain JCSC1435) protein is Serine-rich adhesin for platelets (sraP).